The following is a 1052-amino-acid chain: uncharacterized protein (1052 aa).

This sequence belongs to the IIV-6 050L family.

This is an uncharacterized protein from Invertebrate iridescent virus 6 (IIV-6).